Reading from the N-terminus, the 249-residue chain is MDIVLEATSQTETQVAVQLEPLSSNVVAIVPAAGIGSRMGAGKPKQYLPLLGQSILAHTLDKLLSHPLISQVIVALHPEDADFYALPQAKHPKLKTVIGGSERANSVLAALDKAPDNSWALVHDAARPCLMASDIDKLLTSRVQFPQGAILAMPVRDTMKRANSLGEINSTVCRDNLWHALTPQLFPTSLLRLHLQGALNAGAVVTDEASAMEWAGISPGLVAGRADNIKVTHPDDLELAELFLMRAKA.

It belongs to the IspD/TarI cytidylyltransferase family. IspD subfamily.

The catalysed reaction is 2-C-methyl-D-erythritol 4-phosphate + CTP + H(+) = 4-CDP-2-C-methyl-D-erythritol + diphosphate. The protein operates within isoprenoid biosynthesis; isopentenyl diphosphate biosynthesis via DXP pathway; isopentenyl diphosphate from 1-deoxy-D-xylulose 5-phosphate: step 2/6. Catalyzes the formation of 4-diphosphocytidyl-2-C-methyl-D-erythritol from CTP and 2-C-methyl-D-erythritol 4-phosphate (MEP). This is 2-C-methyl-D-erythritol 4-phosphate cytidylyltransferase from Shewanella oneidensis (strain ATCC 700550 / JCM 31522 / CIP 106686 / LMG 19005 / NCIMB 14063 / MR-1).